The chain runs to 1311 residues: Zinc finger protein 423 (1311 aa).

The segment covering 1 to 11 has biased composition (basic residues); it reads MSRRKQAKPRS. 3 disordered regions span residues 1 to 21, 34 to 70, and 95 to 123; these read MSRRKQAKPRSVKVEEGEASD, GGLEGESECDRKSSRALEDRNSVTSQEERNEDDEDVE, and AHRCPGDGDDDPQLSWVASSPSSKDVASP. Residues 41–54 show a composition bias toward basic and acidic residues; that stretch reads ECDRKSSRALEDRN. 2 positions are modified to phosphoserine: Ser-55 and Ser-58. The C2H2-type 1; degenerate zinc finger occupies 75 to 101; that stretch reads YTCDHCQQDFESLADLTDHRAHRCPGD. The segment covering 110–123 has biased composition (polar residues); sequence WVASSPSSKDVASP. 7 consecutive C2H2-type zinc fingers follow at residues 146-168, 174-196, 202-224, 230-252, 271-294, 303-326, and 331-353; these read YPCQFCDKSFIRLSYLKRHEQIH, FKCTFCSRLFKHKRSRDRHIKLH, YHCHECEAAFSRRDHLKIHLKTH, FKCSVCKRGFSSTSSLQSHMQAH, FMCDYCEDTFSQTEELEKHVLTLH, LQCIHCPEVFVDESTLLAHIHQAH, and HKCPMCPEQFSSVEGVYCHLDSH. The segment at 354-426 is disordered; the sequence is RQPDSSNHSV…PLRGQKKMRD (73 aa). Over residues 373–382 the composition is skewed to polar residues; sequence ASMSSATPDS. The segment covering 390 to 404 has biased composition (low complexity); that stretch reads SVASMSSATPDSSAS. The segment at 436–460 adopts a C2H2-type 9; degenerate zinc-finger fold; the sequence is YSCPYCSKRDFTSLAVLEIHLKTIH. 3 consecutive C2H2-type zinc fingers follow at residues 468-491, 507-530, and 544-567; these read HTCQICLDSMPTLYNLNEHVRKLH, FHCNYCPEMFADINSLQEHIRVSH, and FFCNQCSMGFLTESSLTEHIQQAH. The segment at 590–615 adopts a C2H2-type 13; atypical zinc-finger fold; it reads YSCPYCTNSPIFGSILKLTKHIKENH. A disordered region spans residues 617–654; that stretch reads NIPLAHSKKSKAEQSPVSSDVEVSSPKRQRLSGSANSI. Ser-631 is subject to Phosphoserine. Residues 631–642 show a composition bias toward low complexity; it reads SPVSSDVEVSSP. C2H2-type zinc fingers lie at residues 659-681, 689-711, 719-742, 747-770, 777-800, 808-830, and 834-857; these read YPCNQCDLKFSNFESFQTHLKLH, QACPQCKEDFDSQESLLQHLTVH, YVCESCDKQFSSVDDLQKHLLDMH, YHCTLCQEVFDSKVSIQVHLAVKH, YRCTACNWDFRKEADLQVHVKHSH, HKCIFCGETFSTEVELQCHITTH, and YNCRFCSKAFHAVLLLEKHLREKH. The segment at 913 to 935 adopts a C2H2-type 21; degenerate zinc-finger fold; it reads YGCDICGAAYTMEVLLQNHRLRD. 3 consecutive C2H2-type zinc fingers follow at residues 957-979, 986-1008, and 1047-1069; these read HKCNVCSRTFFSENGLREHLQTH, YMCPICGERFPSLLTLTEHKVTH, and FRCVVCMQTVTSTLELKIHGTFH. A Phosphoserine modification is found at Ser-1081. A C2H2-type 25; degenerate zinc finger spans residues 1091–1109; sequence YKCALCLKEFRSKQDLVRL. C2H2-type zinc fingers lie at residues 1147-1170, 1195-1217, 1225-1247, 1256-1279, and 1286-1309; these read LRCPECNVKFESAEDLESHMQVDH, YQCIKCQMTFENEREIQIHVANH, HECKLCNQMFDSPAKLLCHLIEH, FKCPVCFTVFVQANKLQQHIFAVH, and YDCSQCPQKFFFQTELQNHTMSQH. A compositionally biased stretch (basic and acidic residues) spans 1163–1174; it reads ESHMQVDHRDLT. A disordered region spans residues 1163–1190; sequence ESHMQVDHRDLTPETSGPRKGAQTSPVP.

Belongs to the krueppel C2H2-type zinc-finger protein family. Homodimer. Interacts with PARP1, SMAD1 and SMAD4. Interacts with EBF1. Interacts with CEP290. Expressed in brain, eye, olfactory epithelium, spleen and heart. Expressed in the basal layer, consisting of neural precursor cells and immature sensory neurons of the olfactory epithelium, but not in the mature receptor cells.

The protein localises to the nucleus. In terms of biological role, transcription factor that can both act as an activator or a repressor depending on the context. Plays a central role in BMP signaling and olfactory neurogenesis. Associates with SMADs in response to BMP2 leading to activate transcription of BMP target genes. Acts as a transcriptional repressor via its interaction with EBF1, a transcription factor involved in terminal olfactory receptor neurons differentiation; this interaction preventing EBF1 to bind DNA and activate olfactory-specific genes. Involved in olfactory neurogenesis by participating in a developmental switch that regulates the transition from differentiation to maturation in olfactory receptor neurons. Controls proliferation and differentiation of neural precursors in cerebellar vermis formation. This is Zinc finger protein 423 (Znf423) from Rattus norvegicus (Rat).